The primary structure comprises 385 residues: GDSL esterase/lipase 5 (385 aa).

The first 35 residues, 1-35 (MRESTLMEKVTRRTISSFIFFIVSSTILFLAGKSS), serve as a signal peptide directing secretion. N-linked (GlcNAc...) asparagine glycosylation occurs at Asn45. Residue Ser55 is the Nucleophile of the active site. N-linked (GlcNAc...) asparagine glycans are attached at residues Asn66, Asn194, Asn211, and Asn289. Active-site residues include Asp345 and His348.

This sequence belongs to the 'GDSL' lipolytic enzyme family.

The protein resides in the secreted. This is GDSL esterase/lipase 5 (GLIP5) from Arabidopsis thaliana (Mouse-ear cress).